Reading from the N-terminus, the 980-residue chain is Putative leucine-rich repeat receptor-like serine/threonine-protein kinase At2g24130 (980 aa).

Residues 1–20 (MDYCSLLVVSFLITVMTVLA) form the signal peptide. Topologically, residues 21–593 (SKENDHELIK…ACKKKHKYPS (573 aa)) are extracellular. 2 N-linked (GlcNAc...) asparagine glycosylation sites follow: asparagine 55 and asparagine 88. 8 LRR repeats span residues 65–89 (STQVIELDISGRDLGGEISPSIANL), 90–113 (TGLTVLDLSRNFFVGKIPPEIGSL), 115–138 (ETLKQLSLSENLLHGNIPQELGLL), 139–162 (NRLVYLDLGSNRLNGSIPVQLFCN), 165–189 (SSSLQYIDLSNNSLTGEIPLNYHCH), 191–214 (KELRFLLLWSNKLTGTVPSSLSNS), 215–238 (TNLKWMDLESNMLSGELPSQVISK), and 240–263 (PQLQFLYLSYNHFVSHNNNTNLEP). Asparagine 152, asparagine 162, asparagine 175, and asparagine 213 each carry an N-linked (GlcNAc...) asparagine glycan. Residues asparagine 257 and asparagine 270 are each glycosylated (N-linked (GlcNAc...) asparagine). LRR repeat units follow at residues 271 to 295 (SSDLQELELAGNSLGGEITSSVRHL), 296 to 320 (SVNLVQIHLDQNRIHGSIPPEISNL), 322 to 344 (NLTLLNLSSNLLSGPIPRELCKL), 345 to 370 (SKLERVYLSNNHLTGEIPMELGDIPR), 372 to 391 (GLLDVSRNNLSGSIPDSFGN), 392 to 416 (LSQLRRLLLYGNHLSGTVPQSLGKC), 417 to 440 (INLEILDLSHNNLTGTIPVEVVSN), 442 to 463 (RNLKLYLNLSSNHLSGPIPLEL), 464 to 490 (SKMDMVLSVDLSSNELSGKIPPQLGSC), 491 to 514 (IALEHLNLSRNGFSSTLPSSLGQL), 515 to 537 (PYLKELDVSFNRLTGAIPPSFQQ), and 539 to 563 (STLKHLNFSFNLLSGNVSDKGSFSK). N-linked (GlcNAc...) asparagine glycans are attached at residues asparagine 322 and asparagine 327. N-linked (GlcNAc...) asparagine glycosylation is found at asparagine 380 and asparagine 391. N-linked (GlcNAc...) asparagine glycosylation is found at asparagine 428 and asparagine 449. Asparagine 497 carries N-linked (GlcNAc...) asparagine glycosylation. Asparagine 545 and asparagine 554 each carry an N-linked (GlcNAc...) asparagine glycan. A helical transmembrane segment spans residues 594 to 614 (VLLPVLLSLIATPVLCVFGYP). Topologically, residues 615 to 980 (LVQRSRFGKN…SQETQGEASS (366 aa)) are cytoplasmic. At threonine 658 the chain carries Phosphothreonine. One can recognise a Protein kinase domain in the interval 661–960 (FNASSLIGSG…HEMGRLKEYL (300 aa)). Residues 667-675 (IGSGRFGHV) and lysine 689 each bind ATP. Tyrosine 775 is subject to Phosphotyrosine. Catalysis depends on aspartate 788, which acts as the Proton acceptor. Position 841 is a phosphotyrosine (tyrosine 841).

Belongs to the protein kinase superfamily. Ser/Thr protein kinase family.

It is found in the cell membrane. The catalysed reaction is L-seryl-[protein] + ATP = O-phospho-L-seryl-[protein] + ADP + H(+). It catalyses the reaction L-threonyl-[protein] + ATP = O-phospho-L-threonyl-[protein] + ADP + H(+). This is Putative leucine-rich repeat receptor-like serine/threonine-protein kinase At2g24130 from Arabidopsis thaliana (Mouse-ear cress).